The following is a 706-amino-acid chain: Centrosomal protein kizuna (706 aa).

Residues 63–113 (QRAKTRNLELLGNVENLASKLKEFSIDCSRLLQKRMEYKNHITRLKKDRRK) are a coiled coil. Positions 105–116 (TRLKKDRRKMGS) are enriched in basic residues. Disordered regions lie at residues 105–184 (TRLK…LCMH), 215–347 (VREK…ASRG), 571–603 (EIKP…QSPV), 620–665 (SVAQ…KTKP), and 677–706 (ESDD…DFYD). The span at 118 to 127 (GKSEADEHPS) shows a compositional bias: basic and acidic residues. Composition is skewed to polar residues over residues 128-156 (RLST…NDGA) and 164-180 (HTEQ…SQSG). Residues 215-251 (VREKQMESDWDISQRAREQQRQEELKSPHTTLKEAEV) show a composition bias toward basic and acidic residues. Residues 272–283 (TRSPSPDTTDPS) show a composition bias toward low complexity. Residues 293–304 (GEDEEESAEDKD) are compositionally biased toward acidic residues. Over residues 308 to 320 (PINQNHSDYTSNI) the composition is skewed to polar residues. Acidic residues predominate over residues 586 to 598 (EEQEIQSAEEDSA). Over residues 638 to 648 (PDAHKLEKPEV) the composition is skewed to basic and acidic residues.

The protein belongs to the kizuna family.

It localises to the cytoplasm. The protein localises to the cytoskeleton. Its subcellular location is the microtubule organizing center. The protein resides in the centrosome. It is found in the cilium basal body. Functionally, centrosomal protein required for establishing a robust mitotic centrosome architecture that can endure the forces that converge on the centrosomes during spindle formation. Required for stabilizing the expanded pericentriolar material around the centriole. The chain is Centrosomal protein kizuna (kiz) from Danio rerio (Zebrafish).